The sequence spans 535 residues: Dimethylaniline monooxygenase [N-oxide-forming] 2 (535 aa).

FAD-binding positions include 9-13 (GAGVS), glutamate 32, 40-41 (LW), and 61-62 (NT). Residues 60–61 (TN) and 195–198 (SAAD) contribute to the NADP(+) site. Lysine 492 participates in a covalent cross-link: Glycyl lysine isopeptide (Lys-Gly) (interchain with G-Cter in SUMO). A helical membrane pass occupies residues 510 to 530 (APVSFLIKVLGLLAIVLAFFF).

This sequence belongs to the FMO family. FAD serves as cofactor. Mg(2+) is required as a cofactor.

It localises to the microsome membrane. The protein resides in the endoplasmic reticulum membrane. Its function is as follows. Catalyzes the oxidative metabolism of numerous xenobiotics, including mainly therapeutic drugs and insecticides that contain a soft nucleophile, most commonly nitrogen and sulfur and participates to their bioactivation. The chain is Dimethylaniline monooxygenase [N-oxide-forming] 2 from Rattus norvegicus (Rat).